The following is a 157-amino-acid chain: UPF0225 protein Psyr_3863 (157 aa).

This sequence belongs to the UPF0225 family.

This chain is UPF0225 protein Psyr_3863, found in Pseudomonas syringae pv. syringae (strain B728a).